Consider the following 218-residue polypeptide: Pyridoxine/pyridoxamine 5'-phosphate oxidase (218 aa).

Residues 14 to 17 (RREY) and Lys-72 each bind substrate. FMN-binding positions include 67 to 72 (RIVLLK), 82 to 83 (YT), Arg-88, Lys-89, and Gln-111. Residues Tyr-129, Arg-133, and Ser-137 each contribute to the substrate site. Residues 146–147 (QS) and Trp-191 each bind FMN. 197 to 199 (RLH) provides a ligand contact to substrate. Arg-201 contacts FMN.

This sequence belongs to the pyridoxamine 5'-phosphate oxidase family. As to quaternary structure, homodimer. FMN serves as cofactor.

It carries out the reaction pyridoxamine 5'-phosphate + O2 + H2O = pyridoxal 5'-phosphate + H2O2 + NH4(+). The catalysed reaction is pyridoxine 5'-phosphate + O2 = pyridoxal 5'-phosphate + H2O2. The protein operates within cofactor metabolism; pyridoxal 5'-phosphate salvage; pyridoxal 5'-phosphate from pyridoxamine 5'-phosphate: step 1/1. It functions in the pathway cofactor metabolism; pyridoxal 5'-phosphate salvage; pyridoxal 5'-phosphate from pyridoxine 5'-phosphate: step 1/1. Functionally, catalyzes the oxidation of either pyridoxine 5'-phosphate (PNP) or pyridoxamine 5'-phosphate (PMP) into pyridoxal 5'-phosphate (PLP). This chain is Pyridoxine/pyridoxamine 5'-phosphate oxidase, found in Escherichia coli O157:H7.